The following is a 67-amino-acid chain: ATP synthase F(0) complex subunit 8 (67 aa).

A helical membrane pass occupies residues threonine 8 to methionine 24. Lysine 54 is modified (N6-acetyllysine; alternate). Lysine 54 is modified (N6-succinyllysine; alternate). Residue lysine 57 is modified to N6-acetyllysine.

The protein belongs to the ATPase protein 8 family. Component of the ATP synthase complex composed at least of ATP5F1A/subunit alpha, ATP5F1B/subunit beta, ATP5MC1/subunit c (homooctomer), MT-ATP6/subunit a, MT-ATP8/subunit 8, ATP5ME/subunit e, ATP5MF/subunit f, ATP5MG/subunit g, ATP5MK/subunit k, ATP5MJ/subunit j, ATP5F1C/subunit gamma, ATP5F1D/subunit delta, ATP5F1E/subunit epsilon, ATP5PF/subunit F6, ATP5PB/subunit b, ATP5PD/subunit d, ATP5PO/subunit OSCP. ATP synthase complex consists of a soluble F(1) head domain (subunits alpha(3) and beta(3)) - the catalytic core - and a membrane F(0) domain - the membrane proton channel (subunits c, a, 8, e, f, g, k and j). These two domains are linked by a central stalk (subunits gamma, delta, and epsilon) rotating inside the F1 region and a stationary peripheral stalk (subunits F6, b, d, and OSCP). Interacts with PRICKLE3.

It localises to the mitochondrion membrane. Functionally, subunit 8, of the mitochondrial membrane ATP synthase complex (F(1)F(0) ATP synthase or Complex V) that produces ATP from ADP in the presence of a proton gradient across the membrane which is generated by electron transport complexes of the respiratory chain. ATP synthase complex consist of a soluble F(1) head domain - the catalytic core - and a membrane F(1) domain - the membrane proton channel. These two domains are linked by a central stalk rotating inside the F(1) region and a stationary peripheral stalk. During catalysis, ATP synthesis in the catalytic domain of F(1) is coupled via a rotary mechanism of the central stalk subunits to proton translocation. In vivo, can only synthesize ATP although its ATP hydrolase activity can be activated artificially in vitro. Part of the complex F(0) domain. The sequence is that of ATP synthase F(0) complex subunit 8 from Cricetulus griseus (Chinese hamster).